The chain runs to 294 residues: Undecaprenyl-diphosphatase (294 aa).

6 consecutive transmembrane segments (helical) span residues 39 to 59, 93 to 113, 123 to 143, 198 to 218, 232 to 252, and 268 to 288; these read PGAA…ILYF, ATLG…GFTL, NLWI…VVDA, SFLM…VKAV, PTLV…IGFL, and IGLA…AIDP.

This sequence belongs to the UppP family.

It localises to the cell membrane. It catalyses the reaction di-trans,octa-cis-undecaprenyl diphosphate + H2O = di-trans,octa-cis-undecaprenyl phosphate + phosphate + H(+). Catalyzes the dephosphorylation of undecaprenyl diphosphate (UPP). Confers resistance to bacitracin. This Bifidobacterium longum subsp. infantis (strain ATCC 15697 / DSM 20088 / JCM 1222 / NCTC 11817 / S12) protein is Undecaprenyl-diphosphatase.